The following is a 478-amino-acid chain: Light-independent protochlorophyllide reductase subunit N (478 aa).

Residues cysteine 22, cysteine 47, and cysteine 107 each contribute to the [4Fe-4S] cluster site.

It belongs to the BchN/ChlN family. Protochlorophyllide reductase is composed of three subunits; ChlL, ChlN and ChlB. Forms a heterotetramer of two ChlB and two ChlN subunits. [4Fe-4S] cluster serves as cofactor.

The protein resides in the plastid. Its subcellular location is the chloroplast. It carries out the reaction chlorophyllide a + oxidized 2[4Fe-4S]-[ferredoxin] + 2 ADP + 2 phosphate = protochlorophyllide a + reduced 2[4Fe-4S]-[ferredoxin] + 2 ATP + 2 H2O. Its pathway is porphyrin-containing compound metabolism; chlorophyll biosynthesis (light-independent). Its function is as follows. Component of the dark-operative protochlorophyllide reductase (DPOR) that uses Mg-ATP and reduced ferredoxin to reduce ring D of protochlorophyllide (Pchlide) to form chlorophyllide a (Chlide). This reaction is light-independent. The NB-protein (ChlN-ChlB) is the catalytic component of the complex. In Chlorokybus atmophyticus (Soil alga), this protein is Light-independent protochlorophyllide reductase subunit N.